The chain runs to 416 residues: Probable mannose-6-phosphate isomerase (416 aa).

The Zn(2+) site is built by Q99, H101, E126, and H259. R278 is a catalytic residue.

This sequence belongs to the mannose-6-phosphate isomerase type 1 family. Zn(2+) serves as cofactor.

It is found in the cytoplasm. It carries out the reaction D-mannose 6-phosphate = D-fructose 6-phosphate. It functions in the pathway nucleotide-sugar biosynthesis; GDP-alpha-D-mannose biosynthesis; alpha-D-mannose 1-phosphate from D-fructose 6-phosphate: step 1/2. Functionally, involved in the synthesis of the GDP-mannose and dolichol-phosphate-mannose required for a number of critical mannosyl transfer reactions. This Caenorhabditis elegans protein is Probable mannose-6-phosphate isomerase.